Here is an 81-residue protein sequence, read N- to C-terminus: Cytotoxin 8 (81 aa).

Positions 1-21 (MKTLLLTLVVVTIVCLDLGYT) are cleaved as a signal peptide. 4 disulfides stabilise this stretch: Cys-24-Cys-42, Cys-35-Cys-59, Cys-63-Cys-74, and Cys-75-Cys-80.

Belongs to the three-finger toxin family. Short-chain subfamily. Type IA cytotoxin sub-subfamily. In terms of assembly, monomer in solution; Homodimer and oligomer in the presence of negatively charged lipids forming a pore with a size ranging between 20 and 30 Angstroms. Expressed by the venom gland.

The protein localises to the secreted. The protein resides in the target cell membrane. Shows cytolytic activity on many different cells by forming pore in lipid membranes. In vivo, increases heart rate or kills the animal by cardiac arrest. In addition, it binds to heparin with high affinity, interacts with Kv channel-interacting protein 1 (KCNIP1) in a calcium-independent manner, and binds to integrin alpha-V/beta-3 (ITGAV/ITGB3) with moderate affinity. This Naja atra (Chinese cobra) protein is Cytotoxin 8.